Consider the following 200-residue polypeptide: MPIAELAVIKTVGGPLIAAALGVGAQVIYDGFRKGKDTSIINRLGRTMESISPVRDRIGKLSNVEGKPFREVHESLTRLLEDAKSIIEKYWKLRWSRHVCRKYRYIKKLESIELELVRVAREIQVHQWTDIKEMKAIQVHQWTDIKEMKAIQVDQWTDIKEMKAIQVDQWIDIKEMKAIQVDQWTDIKEMKAQISEKHNK.

In terms of domain architecture, RPW8 spans 1–157; the sequence is MPIAELAVIK…MKAIQVDQWT (157 aa). The helical transmembrane segment at 7-29 threads the bilayer; the sequence is AVIKTVGGPLIAAALGVGAQVIY. Residues 70–127 are a coiled coil; it reads REVHESLTRLLEDAKSIIEKYWKLRWSRHVCRKYRYIKKLESIELELVRVAREIQVHQ.

This sequence belongs to the plant RPW8 protein family.

The protein resides in the membrane. In terms of biological role, probable disease resistance (R) protein. The chain is RPW8-like protein 4 (HR4) from Arabidopsis thaliana (Mouse-ear cress).